The primary structure comprises 201 residues: Holliday junction branch migration complex subunit RuvA (201 aa).

Positions 1 to 64 (MYAYIRGKLT…EDAQLLYGFI (64 aa)) are domain I. The segment at 65-143 (NEEEKDMFLS…ITRETTETLL (79 aa)) is domain II. The segment at 144-150 (SMNEENS) is flexible linker. The tract at residues 151–201 (NSENLVKEALLALEALGYSKREISKVEKVLNKSTFDSVDEAVKLGLKTLVS) is domain III.

This sequence belongs to the RuvA family. In terms of assembly, homotetramer. Forms an RuvA(8)-RuvB(12)-Holliday junction (HJ) complex. HJ DNA is sandwiched between 2 RuvA tetramers; dsDNA enters through RuvA and exits via RuvB. An RuvB hexamer assembles on each DNA strand where it exits the tetramer. Each RuvB hexamer is contacted by two RuvA subunits (via domain III) on 2 adjacent RuvB subunits; this complex drives branch migration. In the full resolvosome a probable DNA-RuvA(4)-RuvB(12)-RuvC(2) complex forms which resolves the HJ.

Its subcellular location is the cytoplasm. Functionally, the RuvA-RuvB-RuvC complex processes Holliday junction (HJ) DNA during genetic recombination and DNA repair, while the RuvA-RuvB complex plays an important role in the rescue of blocked DNA replication forks via replication fork reversal (RFR). RuvA specifically binds to HJ cruciform DNA, conferring on it an open structure. The RuvB hexamer acts as an ATP-dependent pump, pulling dsDNA into and through the RuvAB complex. HJ branch migration allows RuvC to scan DNA until it finds its consensus sequence, where it cleaves and resolves the cruciform DNA. The sequence is that of Holliday junction branch migration complex subunit RuvA from Staphylococcus haemolyticus (strain JCSC1435).